A 151-amino-acid chain; its full sequence is UPAR/Ly6 domain-containing protein rtv (151 aa).

A signal peptide spans 1–19 (MQFTSLLLAVIFLISLVSI). Topologically, residues 20-125 (DGLLRRCYQC…QGDLCNGARS (106 aa)) are extracellular. Intrachain disulfides connect C26/C65, C29/C38, C60/C88, C100/C113, and C115/C120. Residue N45 is glycosylated (N-linked (GlcNAc...) asparagine). N121 carries GPI-anchor amidated asparagine lipidation. Positions 122-151 (GARSWSSAPQMILITMLPLLGSWLLQRMRN) are cleaved as a propeptide — removed in mature form. A helical transmembrane segment spans residues 126–146 (WSSAPQMILITMLPLLGSWLL). At 147-151 (QRMRN) the chain is on the cytoplasmic side.

Belongs to the quiver family.

The protein resides in the cell membrane. Functionally, required for chitin fiber assembly and organization involved in cuticle formation and tracheal development. The chain is UPAR/Ly6 domain-containing protein rtv from Drosophila melanogaster (Fruit fly).